We begin with the raw amino-acid sequence, 439 residues long: 26S proteasome regulatory subunit 4 (439 aa).

Disordered regions lie at residues 1-48 and 82-104; these read MGQN…AMKL and ERLK…LRGT. Basic and acidic residues-rich tracts occupy residues 12 to 25 and 82 to 102; these read GEKK…KKYE and ERLK…DDLR. 225–232 lines the ATP pocket; it reads GPPGTGKT.

The protein belongs to the AAA ATPase family. As to quaternary structure, interacts with PSMD5.

It is found in the cytoplasm. It localises to the nucleus. In terms of biological role, the 26S proteasome is involved in the ATP-dependent degradation of ubiquitinated proteins. The regulatory (or ATPase) complex confers ATP dependency and substrate specificity to the 26S complex. This is 26S proteasome regulatory subunit 4 (Rpt2) from Drosophila melanogaster (Fruit fly).